A 125-amino-acid polypeptide reads, in one-letter code: MTSTPGATPPASSLDPAVAARLKRGADGLVPAIAQQYDTGEVLMLGWMDDEALHRTLTTGRCTYWSRSRQEYWVKGDTSGHVQHVKSVALDCDADTVLVKVDQTGAACHTGDRTCFDADALPLGK.

D91 serves as a coordination point for Mg(2+). Position 92 (C92) interacts with Zn(2+). The Mg(2+) site is built by D93 and D95. C108 and C115 together coordinate Zn(2+).

This sequence belongs to the PRA-CH family. As to quaternary structure, homodimer. Mg(2+) is required as a cofactor. Zn(2+) serves as cofactor.

Its subcellular location is the cytoplasm. The catalysed reaction is 1-(5-phospho-beta-D-ribosyl)-5'-AMP + H2O = 1-(5-phospho-beta-D-ribosyl)-5-[(5-phospho-beta-D-ribosylamino)methylideneamino]imidazole-4-carboxamide. The protein operates within amino-acid biosynthesis; L-histidine biosynthesis; L-histidine from 5-phospho-alpha-D-ribose 1-diphosphate: step 3/9. Catalyzes the hydrolysis of the adenine ring of phosphoribosyl-AMP. This chain is Phosphoribosyl-AMP cyclohydrolase, found in Streptomyces griseus subsp. griseus (strain JCM 4626 / CBS 651.72 / NBRC 13350 / KCC S-0626 / ISP 5235).